We begin with the raw amino-acid sequence, 418 residues long: Serine hydroxymethyltransferase (418 aa).

(6S)-5,6,7,8-tetrahydrofolate is bound by residues L121 and 125–127 (GHL). K230 bears the N6-(pyridoxal phosphate)lysine mark. (6S)-5,6,7,8-tetrahydrofolate is bound at residue 356 to 358 (SPF).

The protein belongs to the SHMT family. In terms of assembly, homodimer. It depends on pyridoxal 5'-phosphate as a cofactor.

It localises to the cytoplasm. The enzyme catalyses (6R)-5,10-methylene-5,6,7,8-tetrahydrofolate + glycine + H2O = (6S)-5,6,7,8-tetrahydrofolate + L-serine. It participates in one-carbon metabolism; tetrahydrofolate interconversion. Its pathway is amino-acid biosynthesis; glycine biosynthesis; glycine from L-serine: step 1/1. Its function is as follows. Catalyzes the reversible interconversion of serine and glycine with tetrahydrofolate (THF) serving as the one-carbon carrier. This reaction serves as the major source of one-carbon groups required for the biosynthesis of purines, thymidylate, methionine, and other important biomolecules. Also exhibits THF-independent aldolase activity toward beta-hydroxyamino acids, producing glycine and aldehydes, via a retro-aldol mechanism. The sequence is that of Serine hydroxymethyltransferase from Idiomarina loihiensis (strain ATCC BAA-735 / DSM 15497 / L2-TR).